Consider the following 78-residue polypeptide: Large ribosomal subunit protein bL28 (78 aa).

Residues 1–25 (MSRVCQVTGKRPAVGNNRSHAKNAT) are disordered.

This sequence belongs to the bacterial ribosomal protein bL28 family.

This Aliivibrio salmonicida (strain LFI1238) (Vibrio salmonicida (strain LFI1238)) protein is Large ribosomal subunit protein bL28.